A 156-amino-acid chain; its full sequence is Protein CROC-4 (156 aa).

The tract at residues Arg46 to Gly71 is disordered. Over residues Thr48–Ser59 the composition is skewed to low complexity.

As to expression, expressed throughout the brain in the thalamus, subthalamic nucleus, corpus callosum, hippocampus, substantia nigra, caudate nucleus, and amygdala.

It localises to the nucleus. Functionally, may play a role in FOS signaling pathways involved in development and remodeling of neurons. Promotes transcription of the FOS promoter. This is Protein CROC-4 from Homo sapiens (Human).